Here is a 530-residue protein sequence, read N- to C-terminus: Cytochrome P450 monooxygenase aneG (530 aa).

A glycan (N-linked (GlcNAc...) asparagine) is linked at Asn2. Residues 43–63 (WLSILGFTIGCYYVIYTFYAL) traverse the membrane as a helical segment. N-linked (GlcNAc...) asparagine glycosylation occurs at Asn92. Residue Cys474 coordinates heme.

This sequence belongs to the cytochrome P450 family. It depends on heme as a cofactor.

The protein resides in the membrane. It carries out the reaction asperaculane E + reduced [NADPH--hemoprotein reductase] + O2 = asperaculane G + oxidized [NADPH--hemoprotein reductase] + H2O + H(+). It catalyses the reaction asperaculane G + reduced [NADPH--hemoprotein reductase] + O2 = aculene D + oxidized [NADPH--hemoprotein reductase] + CO2 + 2 H2O. The catalysed reaction is asperaculane E + 2 reduced [NADPH--hemoprotein reductase] + 2 O2 = aculene D + 2 oxidized [NADPH--hemoprotein reductase] + CO2 + 3 H2O + H(+). Its pathway is secondary metabolite biosynthesis. Its function is as follows. Cytochrome P450 monooxygenase; part of the gene cluster that mediates the biosynthesis of aculenes, a unique type of norsesquiterpenes that contain a nordaucane skeleton linked to an L-proline moiety and are of mixed biosynthetic origin. The pathway begins with the synthesis of dauca-4,7-diene by the terpene cyclase aneC using farnesyl pyrophosphate (FPP) as substrate. The cytochrome P450 monooxygenase aneF then performs the initial oxidation at C-12 of dauca-4,7-diene to yield asperaculane D. Asperaculane D is substrate of the cytochrome P450 monooxygenase aneD for C-10 hydroxylation to yield asperaculane E. The cytochrome P450 monooxygenase aneG then converts asperaculane E into aculene D via C-2 oxidation. The monomodular nonribosomal peptide synthtase aneB adenylates L-proline and the thiohydrolase aneE transfers this activated L-proline derivative to aculenes D and C to produce respectively aculenes B and A. The dioxygenase aneA converts aculene D into aculene C, and aculene B into aculene A by introducing the 5,6-alkene moiety. Asperculanes A, B, C and F, as well as 14-prolyl asperculane C, might be shunt products of the pathway. The protein is Cytochrome P450 monooxygenase aneG of Aspergillus aculeatus (strain ATCC 16872 / CBS 172.66 / WB 5094).